The chain runs to 264 residues: Phosphonoacetaldehyde hydrolase (264 aa).

Asp9 acts as the Nucleophile in catalysis. Mg(2+) contacts are provided by Asp9 and Ala11. Lys50 acts as the Schiff-base intermediate with substrate in catalysis. Asp183 is a Mg(2+) binding site.

The protein belongs to the HAD-like hydrolase superfamily. PhnX family. Homodimer. The cofactor is Mg(2+).

It catalyses the reaction phosphonoacetaldehyde + H2O = acetaldehyde + phosphate + H(+). In terms of biological role, involved in phosphonate degradation. This Bacillus cereus (strain ATCC 14579 / DSM 31 / CCUG 7414 / JCM 2152 / NBRC 15305 / NCIMB 9373 / NCTC 2599 / NRRL B-3711) protein is Phosphonoacetaldehyde hydrolase.